The sequence spans 311 residues: Nuclear hormone receptor family member nhr-111 (311 aa).

A DNA-binding region (nuclear receptor) is located at residues 39–115; that stretch reads ITLCAVCGDT…KGMNKNAVQP (77 aa). 2 consecutive NR C4-type zinc fingers follow at residues 42–62 and 78–98; these read CAVCGDTSNGNHYGVPTCFGC and CWNGDGNCVIDKANRNRCKSC. One can recognise an NR LBD domain in the interval 116–311; sequence ERTSHSYTVE…KACEIVISFL (196 aa).

It belongs to the nuclear hormone receptor family.

Its subcellular location is the nucleus. Functionally, orphan nuclear receptor. This chain is Nuclear hormone receptor family member nhr-111 (nhr-111), found in Caenorhabditis elegans.